The sequence spans 352 residues: Beta-1,4-xylanase (352 aa).

Residues 1 to 23 (MINQRFSILVLLLILLTFSLGFL) form the signal peptide. The region spanning 29–352 (GMEIPSLKEV…KKAFWEIVKF (324 aa)) is the GH10 domain. Glu155 functions as the Proton donor in the catalytic mechanism. Residue Glu262 is the Nucleophile of the active site.

Belongs to the glycosyl hydrolase 10 (cellulase F) family.

Its subcellular location is the secreted. It carries out the reaction Endohydrolysis of (1-&gt;4)-beta-D-xylosidic linkages in xylans.. Its pathway is glycan degradation; xylan degradation. The chain is Beta-1,4-xylanase (xynA) from Dictyoglomus thermophilum.